Here is a 75-residue protein sequence, read N- to C-terminus: Small ribosomal subunit protein bS18c (75 aa).

This sequence belongs to the bacterial ribosomal protein bS18 family. Part of the 30S ribosomal subunit.

The protein resides in the plastid. It localises to the chloroplast. This Marchantia polymorpha (Common liverwort) protein is Small ribosomal subunit protein bS18c (rps18).